The sequence spans 1384 residues: Enhancer of mRNA-decapping protein 4 (1384 aa).

4 WD repeats span residues 171-211 (GFTG…SKIQ), 227-274 (NSNR…SNNS), 292-331 (GHAA…QDQP), and 340-390 (HNGQ…CLQT). Disordered regions lie at residues 471–494 (TEVL…TSES), 551–584 (AMSS…SPAP), and 796–931 (AGAA…MSTE). Positions 482-494 (SMTAEGNQGTSES) are enriched in polar residues. The span at 834–844 (CSREEIKDRHI) shows a compositional bias: basic and acidic residues. 2 stretches are compositionally biased toward polar residues: residues 854-866 (HLTQ…ASAE) and 918-931 (SSQS…MSTE). The stretch at 930–1012 (TEVQDELLQM…QQLQDQLVQQ (83 aa)) forms a coiled coil.

This sequence belongs to the WD repeat EDC4 family.

The protein resides in the cytoplasm. Its subcellular location is the P-body. It is found in the nucleus. In terms of biological role, in the process of mRNA degradation, seems to play a role in mRNA decapping. This chain is Enhancer of mRNA-decapping protein 4 (edc4), found in Danio rerio (Zebrafish).